The primary structure comprises 574 residues: Serine hydroxymethyltransferase (574 aa).

180–182 lines the (6S)-5,6,7,8-tetrahydrofolate pocket; that stretch reads GHL. Lys288 carries the N6-(pyridoxal phosphate)lysine modification. Glu306 contributes to the (6S)-5,6,7,8-tetrahydrofolate binding site.

This sequence belongs to the SHMT family. Homodimer. Pyridoxal 5'-phosphate serves as cofactor.

The protein localises to the cytoplasm. The catalysed reaction is (6R)-5,10-methylene-5,6,7,8-tetrahydrofolate + glycine + H2O = (6S)-5,6,7,8-tetrahydrofolate + L-serine. It participates in one-carbon metabolism; tetrahydrofolate interconversion. The protein operates within amino-acid biosynthesis; glycine biosynthesis; glycine from L-serine: step 1/1. Its function is as follows. Catalyzes the reversible interconversion of serine and glycine with tetrahydrofolate (THF) serving as the one-carbon carrier. This reaction serves as the major source of one-carbon groups required for the biosynthesis of purines, thymidylate, methionine, and other important biomolecules. Also exhibits THF-independent aldolase activity toward beta-hydroxyamino acids, producing glycine and aldehydes, via a retro-aldol mechanism. The polypeptide is Serine hydroxymethyltransferase (Treponema pallidum (strain Nichols)).